Consider the following 234-residue polypeptide: Leucyl/phenylalanyl-tRNA--protein transferase (234 aa).

Belongs to the L/F-transferase family.

The protein resides in the cytoplasm. It catalyses the reaction N-terminal L-lysyl-[protein] + L-leucyl-tRNA(Leu) = N-terminal L-leucyl-L-lysyl-[protein] + tRNA(Leu) + H(+). The enzyme catalyses N-terminal L-arginyl-[protein] + L-leucyl-tRNA(Leu) = N-terminal L-leucyl-L-arginyl-[protein] + tRNA(Leu) + H(+). It carries out the reaction L-phenylalanyl-tRNA(Phe) + an N-terminal L-alpha-aminoacyl-[protein] = an N-terminal L-phenylalanyl-L-alpha-aminoacyl-[protein] + tRNA(Phe). Functions in the N-end rule pathway of protein degradation where it conjugates Leu, Phe and, less efficiently, Met from aminoacyl-tRNAs to the N-termini of proteins containing an N-terminal arginine or lysine. This Shigella flexneri serotype 5b (strain 8401) protein is Leucyl/phenylalanyl-tRNA--protein transferase.